The primary structure comprises 261 residues: MKKRKIHHSDDEEDDTFYYRYSSVAAPPPSNPKHQPSSSAKSSAPGGGSGGLAPSKSTLYVSNLDFSLTNSDIHTLFSTFGKVARVTVLKDRHTRQSRGVAFVLYVSREDAAKAARSMDAKILNGRKLTVSIAADNGRASEFIKKRVYKDKSRCYECGDEGHLSYECPKNQLGPRERPPPPKKRGRRKEEEGEAEEISWSAAAPSLAVAEEEFEEENWASVVDNEAGERLRKREAEEEEERRMKRKEKKVSYFSDESDDED.

The tract at residues 18-51 is disordered; sequence YYRYSSVAAPPPSNPKHQPSSSAKSSAPGGGSGG. The 79-residue stretch at 57-135 folds into the RRM domain; it reads STLYVSNLDF…RKLTVSIAAD (79 aa). The CCHC-type zinc finger occupies 153 to 169; it reads RCYECGDEGHLSYECPK. Residues 165–261 are disordered; sequence YECPKNQLGP…YFSDESDDED (97 aa). Residues 226–235 are compositionally biased toward basic and acidic residues; it reads AGERLRKREA.

In terms of assembly, component of the U11/U12 snRNPs that are part of the U12-type spliceosome. In terms of tissue distribution, ubiquitous. Abundantly expressed in the shoot apical neristem.

The protein localises to the nucleus. Functionally, RNA chaperone required for proper U12 intron splicing and for normal growth and development of plants. Mainly responsible for meristem activity. Plays a role in regulating cell division. This Arabidopsis thaliana (Mouse-ear cress) protein is U11/U12 small nuclear ribonucleoprotein 31 kDa protein (SNRNP31).